A 199-amino-acid polypeptide reads, in one-letter code: Dephospho-CoA kinase (199 aa).

Positions 3–199 (VLGLTGSIGM…AAARMPRRRP (197 aa)) constitute a DPCK domain. An ATP-binding site is contributed by 11–16 (GMGKST).

The protein belongs to the CoaE family.

The protein resides in the cytoplasm. The catalysed reaction is 3'-dephospho-CoA + ATP = ADP + CoA + H(+). It functions in the pathway cofactor biosynthesis; coenzyme A biosynthesis; CoA from (R)-pantothenate: step 5/5. Its function is as follows. Catalyzes the phosphorylation of the 3'-hydroxyl group of dephosphocoenzyme A to form coenzyme A. The polypeptide is Dephospho-CoA kinase (Rhodopseudomonas palustris (strain HaA2)).